Reading from the N-terminus, the 209-residue chain is MARNLDPKCRQCRREGEKLFLKGEKCFTDKCAIERRAYAPGQHGQKSGARLSGYGVQLREKQKIRRIYGVLEGQFRLTYKRADSRKGVTGENLLSMLESRLDSVCYRMGFGASRTEARQIVRHNGIVVNGRRVNIPSYQVRPGDVVEVAEKSKAQLRIKAAADATATRGYPEWIEVDAKALKGTYKAHPQRSELPSTINESLVVELYSK.

Positions 99 to 159 (SRLDSVCYRM…EKSKAQLRIK (61 aa)) constitute an S4 RNA-binding domain.

The protein belongs to the universal ribosomal protein uS4 family. Part of the 30S ribosomal subunit. Contacts protein S5. The interaction surface between S4 and S5 is involved in control of translational fidelity.

In terms of biological role, one of the primary rRNA binding proteins, it binds directly to 16S rRNA where it nucleates assembly of the body of the 30S subunit. Functionally, with S5 and S12 plays an important role in translational accuracy. The protein is Small ribosomal subunit protein uS4 of Thiobacillus denitrificans (strain ATCC 25259 / T1).